A 248-amino-acid polypeptide reads, in one-letter code: Pyridoxine 5'-phosphate synthase (248 aa).

3-amino-2-oxopropyl phosphate is bound at residue asparagine 9. A 1-deoxy-D-xylulose 5-phosphate-binding site is contributed by aspartate 11 to histidine 12. Position 20 (arginine 20) interacts with 3-amino-2-oxopropyl phosphate. Histidine 45 acts as the Proton acceptor in catalysis. The 1-deoxy-D-xylulose 5-phosphate site is built by arginine 47 and histidine 52. Glutamate 72 acts as the Proton acceptor in catalysis. Threonine 102 provides a ligand contact to 1-deoxy-D-xylulose 5-phosphate. The active-site Proton donor is the histidine 193. Residues glycine 194 and glycine 215–histidine 216 each bind 3-amino-2-oxopropyl phosphate.

It belongs to the PNP synthase family. Homooctamer; tetramer of dimers.

It is found in the cytoplasm. The catalysed reaction is 3-amino-2-oxopropyl phosphate + 1-deoxy-D-xylulose 5-phosphate = pyridoxine 5'-phosphate + phosphate + 2 H2O + H(+). Its pathway is cofactor biosynthesis; pyridoxine 5'-phosphate biosynthesis; pyridoxine 5'-phosphate from D-erythrose 4-phosphate: step 5/5. Functionally, catalyzes the complicated ring closure reaction between the two acyclic compounds 1-deoxy-D-xylulose-5-phosphate (DXP) and 3-amino-2-oxopropyl phosphate (1-amino-acetone-3-phosphate or AAP) to form pyridoxine 5'-phosphate (PNP) and inorganic phosphate. This Hydrogenovibrio crunogenus (strain DSM 25203 / XCL-2) (Thiomicrospira crunogena) protein is Pyridoxine 5'-phosphate synthase.